Reading from the N-terminus, the 701-residue chain is Elongation factor G (701 aa).

Residues Ser-11–Leu-287 enclose the tr-type G domain. GTP contacts are provided by residues Ala-20–Thr-27, Asp-84–His-88, and Asn-138–Asp-141.

This sequence belongs to the TRAFAC class translation factor GTPase superfamily. Classic translation factor GTPase family. EF-G/EF-2 subfamily.

It localises to the cytoplasm. In terms of biological role, catalyzes the GTP-dependent ribosomal translocation step during translation elongation. During this step, the ribosome changes from the pre-translocational (PRE) to the post-translocational (POST) state as the newly formed A-site-bound peptidyl-tRNA and P-site-bound deacylated tRNA move to the P and E sites, respectively. Catalyzes the coordinated movement of the two tRNA molecules, the mRNA and conformational changes in the ribosome. This chain is Elongation factor G (fusA), found in Mycobacterium tuberculosis (strain CDC 1551 / Oshkosh).